Consider the following 301-residue polypeptide: ATP synthase subunit gamma, mitochondrial (301 aa).

It belongs to the ATPase gamma chain family. F-type ATPases have 2 components, CF(1) - the catalytic core - and CF(0) - the membrane proton channel. CF(1) has five subunits: alpha(3), beta(3), gamma(1), delta(1), epsilon(1). CF(0) has three main subunits: a, b and c.

Its subcellular location is the mitochondrion. The protein resides in the mitochondrion inner membrane. Its function is as follows. Mitochondrial membrane ATP synthase (F(1)F(0) ATP synthase or Complex V) produces ATP from ADP in the presence of a proton gradient across the membrane which is generated by electron transport complexes of the respiratory chain. F-type ATPases consist of two structural domains, F(1) - containing the extramembraneous catalytic core, and F(0) - containing the membrane proton channel, linked together by a central stalk and a peripheral stalk. During catalysis, ATP synthesis in the catalytic domain of F(1) is coupled via a rotary mechanism of the central stalk subunits to proton translocation. Part of the complex F(1) domain and the central stalk which is part of the complex rotary element. The gamma subunit protrudes into the catalytic domain formed of alpha(3)beta(3). Rotation of the central stalk against the surrounding alpha(3)beta(3) subunits leads to hydrolysis of ATP in three separate catalytic sites on the beta subunits. The sequence is that of ATP synthase subunit gamma, mitochondrial (atp3) from Schizosaccharomyces pombe (strain 972 / ATCC 24843) (Fission yeast).